The sequence spans 409 residues: Elongation factor Tu (409 aa).

A tr-type G domain is found at K10 to E214. A G1 region spans residues G19–T26. A GTP-binding site is contributed by G19–T26. T26 contributes to the Mg(2+) binding site. A G2 region spans residues G60–N64. Residues D81–G84 form a G3 region. GTP is bound by residues D81 to H85 and N136 to D139. A G4 region spans residues N136 to D139. Positions S174 to L176 are G5.

As to quaternary structure, monomer.

It is found in the cytoplasm. It carries out the reaction GTP + H2O = GDP + phosphate + H(+). GTP hydrolase that promotes the GTP-dependent binding of aminoacyl-tRNA to the A-site of ribosomes during protein biosynthesis. In Nostoc sp. (strain PCC 7120 / SAG 25.82 / UTEX 2576), this protein is Elongation factor Tu.